A 450-amino-acid chain; its full sequence is Tripartite motif-containing protein 77 (450 aa).

An RING-type zinc finger spans residues 15-56 (CSICTDYLTDPVTICCGHRFCSPCLCLLWEDTLTPNCCPVCR). Residues 88-131 (SAMLICRRHQEIKNLICETDRSLLCFLCSQSPRHATHKHYMTRE) form a B box-type zinc finger. Cysteine 93, histidine 96, cysteine 115, and histidine 121 together coordinate Zn(2+). The B30.2/SPRY domain occupies 269–450 (QLSAWTITGV…LRPFICHGSK (182 aa)).

This sequence belongs to the TRIM/RBCC family.

In Homo sapiens (Human), this protein is Tripartite motif-containing protein 77 (TRIM77).